The following is a 127-amino-acid chain: MARIAGVDIPREKRVEIALTYIFGIGPSRATQILLSTGINPNLRVRELTDVQVSLLREEIEQKYQVEGDLRRFENINIKRLMDIGCLRGRRHRLGLPVRGQRTRTNARTRRGGRKTVAGKKKAAAKK.

Residues P97 to K127 form a disordered region. Over residues Q101–K127 the composition is skewed to basic residues.

The protein belongs to the universal ribosomal protein uS13 family. Part of the 30S ribosomal subunit. Forms a loose heterodimer with protein S19. Forms two bridges to the 50S subunit in the 70S ribosome.

Located at the top of the head of the 30S subunit, it contacts several helices of the 16S rRNA. In the 70S ribosome it contacts the 23S rRNA (bridge B1a) and protein L5 of the 50S subunit (bridge B1b), connecting the 2 subunits; these bridges are implicated in subunit movement. Contacts the tRNAs in the A and P-sites. The sequence is that of Small ribosomal subunit protein uS13 from Gloeobacter violaceus (strain ATCC 29082 / PCC 7421).